Here is a 372-residue protein sequence, read N- to C-terminus: PqqA peptide cyclase (372 aa).

Positions 4-220 (APPPLSVLLE…ETARRQLGDR (217 aa)) constitute a Radical SAM core domain. Residues Cys18, Cys22, and Cys25 each coordinate [4Fe-4S] cluster.

Belongs to the radical SAM superfamily. PqqE family. In terms of assembly, interacts with PqqD. The interaction is necessary for activity of PqqE. [4Fe-4S] cluster is required as a cofactor.

It carries out the reaction [PQQ precursor protein] + S-adenosyl-L-methionine = E-Y cross-linked-[PQQ precursor protein] + 5'-deoxyadenosine + L-methionine + H(+). It participates in cofactor biosynthesis; pyrroloquinoline quinone biosynthesis. Catalyzes the cross-linking of a glutamate residue and a tyrosine residue in the PqqA protein as part of the biosynthesis of pyrroloquinoline quinone (PQQ). The polypeptide is PqqA peptide cyclase (Xanthomonas axonopodis pv. citri (strain 306)).